The primary structure comprises 250 residues: 5'-nucleotidase SurE (250 aa).

A divalent metal cation contacts are provided by Asp8, Asp9, Ser40, and Asn95.

Belongs to the SurE nucleotidase family. A divalent metal cation is required as a cofactor.

It is found in the cytoplasm. It catalyses the reaction a ribonucleoside 5'-phosphate + H2O = a ribonucleoside + phosphate. Its function is as follows. Nucleotidase that shows phosphatase activity on nucleoside 5'-monophosphates. This is 5'-nucleotidase SurE from Nitratidesulfovibrio vulgaris (strain ATCC 29579 / DSM 644 / CCUG 34227 / NCIMB 8303 / VKM B-1760 / Hildenborough) (Desulfovibrio vulgaris).